We begin with the raw amino-acid sequence, 274 residues long: 2,3,4,5-tetrahydropyridine-2,6-dicarboxylate N-succinyltransferase (274 aa).

Substrate contacts are provided by Arg104 and Asp141.

It belongs to the transferase hexapeptide repeat family. Homotrimer.

The protein resides in the cytoplasm. It catalyses the reaction (S)-2,3,4,5-tetrahydrodipicolinate + succinyl-CoA + H2O = (S)-2-succinylamino-6-oxoheptanedioate + CoA. The protein operates within amino-acid biosynthesis; L-lysine biosynthesis via DAP pathway; LL-2,6-diaminopimelate from (S)-tetrahydrodipicolinate (succinylase route): step 1/3. The chain is 2,3,4,5-tetrahydropyridine-2,6-dicarboxylate N-succinyltransferase from Shewanella baltica (strain OS155 / ATCC BAA-1091).